Consider the following 308-residue polypeptide: MNLKRIIISGPTGVGKTDLIVEISKNLPIEVISMDSRQIYKYMDIGTAKPDPYQLMLVKHHMIDIIEPNEYFNAFLYQKMAKEIEKEILLRGKIPIYVGGTGLYIDALVKGFFEGVPRDENIRKELSKLNEQEPGILRKMLEEFDPEAASRIHPQDMKRTIRALEVYLKTGKRISELQKQDKSDDFVLIVLNTDRNILYERINIRAEKMIEHGLIDEVKELIEKYDKTLDTFKTIGYREIIDYLDGIYGLETAIHLIKRNTRHYARRQLIYLRRFKNSLWFDPLHSETKEKIVEIISGVYNELSQKKE.

Position 10-17 (10-17 (GPTGVGKT)) interacts with ATP. Position 12–17 (12–17 (TGVGKT)) interacts with substrate. The segment at 35 to 38 (DSRQ) is interaction with substrate tRNA.

This sequence belongs to the IPP transferase family. In terms of assembly, monomer. Requires Mg(2+) as cofactor.

The catalysed reaction is adenosine(37) in tRNA + dimethylallyl diphosphate = N(6)-dimethylallyladenosine(37) in tRNA + diphosphate. In terms of biological role, catalyzes the transfer of a dimethylallyl group onto the adenine at position 37 in tRNAs that read codons beginning with uridine, leading to the formation of N6-(dimethylallyl)adenosine (i(6)A). This chain is tRNA dimethylallyltransferase, found in Fervidobacterium nodosum (strain ATCC 35602 / DSM 5306 / Rt17-B1).